The primary structure comprises 448 residues: Tubulin beta chain (448 aa).

Positions 11, 69, 138, 142, 143, 144, 204, and 226 each coordinate GTP. Glu-69 is a Mg(2+) binding site. The segment at 429 to 448 (GIDEGDEDYEIEEEKEPLEY) is disordered.

It belongs to the tubulin family. In terms of assembly, dimer of alpha and beta chains. A typical microtubule is a hollow water-filled tube with an outer diameter of 25 nm and an inner diameter of 15 nM. Alpha-beta heterodimers associate head-to-tail to form protofilaments running lengthwise along the microtubule wall with the beta-tubulin subunit facing the microtubule plus end conferring a structural polarity. Microtubules usually have 13 protofilaments but different protofilament numbers can be found in some organisms and specialized cells. It depends on Mg(2+) as a cofactor.

The protein localises to the cytoplasm. Its subcellular location is the cytoskeleton. Tubulin is the major constituent of microtubules, a cylinder consisting of laterally associated linear protofilaments composed of alpha- and beta-tubulin heterodimers. Microtubules grow by the addition of GTP-tubulin dimers to the microtubule end, where a stabilizing cap forms. Below the cap, tubulin dimers are in GDP-bound state, owing to GTPase activity of alpha-tubulin. This Schizosaccharomyces pombe (strain 972 / ATCC 24843) (Fission yeast) protein is Tubulin beta chain (nda3).